Reading from the N-terminus, the 490-residue chain is Betaine aldehyde dehydrogenase (490 aa).

Positions 26, 27, and 93 each coordinate K(+). 150–152 (GAW) is an NAD(+) binding site. Residue lysine 162 is the Charge relay system of the active site. 176–179 (KPSE) is a binding site for NAD(+). Valine 180 is a K(+) binding site. 230–233 (GVAS) is a binding site for NAD(+). Leucine 246 contacts K(+). Catalysis depends on glutamate 252, which acts as the Proton acceptor. Glycine 254, cysteine 286, and glutamate 387 together coordinate NAD(+). Cysteine 286 serves as the catalytic Nucleophile. Position 286 is a cysteine sulfenic acid (-SOH) (cysteine 286). Residues lysine 457 and glycine 460 each coordinate K(+). Glutamate 464 serves as the catalytic Charge relay system.

Belongs to the aldehyde dehydrogenase family. As to quaternary structure, dimer of dimers. Requires K(+) as cofactor.

The enzyme catalyses betaine aldehyde + NAD(+) + H2O = glycine betaine + NADH + 2 H(+). It functions in the pathway amine and polyamine biosynthesis; betaine biosynthesis via choline pathway; betaine from betaine aldehyde: step 1/1. Functionally, involved in the biosynthesis of the osmoprotectant glycine betaine. Catalyzes the irreversible oxidation of betaine aldehyde to the corresponding acid. The sequence is that of Betaine aldehyde dehydrogenase from Klebsiella pneumoniae (strain 342).